Consider the following 481-residue polypeptide: Chromosomal replication initiator protein DnaA (481 aa).

Residues 1–74 (MSQDLWSFCL…ELGAEFHGAP (74 aa)) form a domain I, interacts with DnaA modulators region. The tract at residues 74–144 (PIEIELVLPA…TASDLAYEKT (71 aa)) is domain II. The disordered stretch occupies residues 101–123 (AGPAPAPTPSQAPAATAAAPAVV). Residues 111–123 (QAPAATAAAPAVV) show a composition bias toward low complexity. Positions 145–361 (RLNADFTFDT…GALNKVVAFA (217 aa)) are domain III, AAA+ region. ATP is bound by residues Gly-189, Gly-191, Lys-192, and Thr-193. The tract at residues 362–481 (RFHGRGITLE…VHVLTQVLRG (120 aa)) is domain IV, binds dsDNA.

This sequence belongs to the DnaA family. In terms of assembly, oligomerizes as a right-handed, spiral filament on DNA at oriC.

Its subcellular location is the cytoplasm. Its function is as follows. Plays an essential role in the initiation and regulation of chromosomal replication. ATP-DnaA binds to the origin of replication (oriC) to initiate formation of the DNA replication initiation complex once per cell cycle. Binds the DnaA box (a 9 base pair repeat at the origin) and separates the double-stranded (ds)DNA. Forms a right-handed helical filament on oriC DNA; dsDNA binds to the exterior of the filament while single-stranded (ss)DNA is stabiized in the filament's interior. The ATP-DnaA-oriC complex binds and stabilizes one strand of the AT-rich DNA unwinding element (DUE), permitting loading of DNA polymerase. After initiation quickly degrades to an ADP-DnaA complex that is not apt for DNA replication. Binds acidic phospholipids. This is Chromosomal replication initiator protein DnaA from Aromatoleum aromaticum (strain DSM 19018 / LMG 30748 / EbN1) (Azoarcus sp. (strain EbN1)).